Consider the following 709-residue polypeptide: Ral guanine nucleotide dissociation stimulator-like 3 (709 aa).

The interval 26–55 (VYSVSLRRQRSQRSTPERSGEGQTPIPATD) is disordered. Residues 64–201 (KVRALRAARL…LLEDFLKEAK (138 aa)) enclose the N-terminal Ras-GEF domain. Disordered regions lie at residues 203–225 (EQTEEEKRLAWSGPPRIAQTPGS), 395–416 (SQEETTEDDDCPSGSLPSKLPP), and 502–604 (PPAA…SRVP). Positions 248–503 (SVDDVAEQLT…YRVSRVIEPP (256 aa)) constitute a Ras-GEF domain. 2 stretches are compositionally biased toward low complexity: residues 502–511 (PPAASCPSSP) and 533–551 (SSPGGSPGDPSSPTSSVSP). 2 positions are modified to phosphoserine: S506 and S510. Positions 552-576 (GSPPSSPRNREPPPPGSPPASPGPQ) are enriched in pro residues. 5 positions are modified to phosphoserine: S553, S568, S572, S577, and S600. The tract at residues 611–706 (SEARVIRVSI…KEGTGHTLSA (96 aa)) is interaction with HRAS, MRAS and RIT1. Residues 612–699 (EARVIRVSIN…GDFLLRRKEG (88 aa)) enclose the Ras-associating domain.

In terms of assembly, interacts with GTP-bound forms of RIT1, HRAS and MRAS. As to expression, widely expressed. Expressed at high levels in the liver and kidney.

Functionally, guanine nucleotide exchange factor (GEF) for Ral-A. Potential effector of GTPase HRas and Ras-related protein M-Ras. Negatively regulates Elk-1-dependent gene induction downstream of HRas and MEKK1. The sequence is that of Ral guanine nucleotide dissociation stimulator-like 3 (Rgl3) from Mus musculus (Mouse).